A 410-amino-acid chain; its full sequence is Protein TIC 214 (410 aa).

6 helical membrane passes run 22–42 (FVFGLICGSLLGTSMNVGSFI), 61–81 (GSAISETFFLFLILFGYIGVI), 87–107 (LEPSLTFIITVFCADTIIGFL), 131–151 (AVIVFGNPGSTWGATSLITSI), 161–181 (LFLFGVFLGIFVIGCGIGFLI), and 210–230 (LALCILILSTIYYHWQVYIGL).

The protein belongs to the TIC214 family. Part of the Tic complex.

The protein resides in the plastid. It is found in the chloroplast inner membrane. Involved in protein precursor import into chloroplasts. May be part of an intermediate translocation complex acting as a protein-conducting channel at the inner envelope. In Mesostigma viride (Green alga), this protein is Protein TIC 214.